A 250-amino-acid polypeptide reads, in one-letter code: Biosynthetic peptidoglycan transglycosylase (250 aa).

The helical transmembrane segment at 15 to 35 threads the bilayer; sequence AVLLFFVSSLGFVLLYRFVPV.

Belongs to the glycosyltransferase 51 family.

The protein resides in the cell inner membrane. The enzyme catalyses [GlcNAc-(1-&gt;4)-Mur2Ac(oyl-L-Ala-gamma-D-Glu-L-Lys-D-Ala-D-Ala)](n)-di-trans,octa-cis-undecaprenyl diphosphate + beta-D-GlcNAc-(1-&gt;4)-Mur2Ac(oyl-L-Ala-gamma-D-Glu-L-Lys-D-Ala-D-Ala)-di-trans,octa-cis-undecaprenyl diphosphate = [GlcNAc-(1-&gt;4)-Mur2Ac(oyl-L-Ala-gamma-D-Glu-L-Lys-D-Ala-D-Ala)](n+1)-di-trans,octa-cis-undecaprenyl diphosphate + di-trans,octa-cis-undecaprenyl diphosphate + H(+). Its pathway is cell wall biogenesis; peptidoglycan biosynthesis. In terms of biological role, peptidoglycan polymerase that catalyzes glycan chain elongation from lipid-linked precursors. The sequence is that of Biosynthetic peptidoglycan transglycosylase from Bdellovibrio bacteriovorus (strain ATCC 15356 / DSM 50701 / NCIMB 9529 / HD100).